Consider the following 205-residue polypeptide: Ribosomal RNA large subunit methyltransferase E (205 aa).

G60, W62, D80, D96, and D121 together coordinate S-adenosyl-L-methionine. The active-site Proton acceptor is the K161.

Belongs to the class I-like SAM-binding methyltransferase superfamily. RNA methyltransferase RlmE family.

The protein resides in the cytoplasm. The enzyme catalyses uridine(2552) in 23S rRNA + S-adenosyl-L-methionine = 2'-O-methyluridine(2552) in 23S rRNA + S-adenosyl-L-homocysteine + H(+). Functionally, specifically methylates the uridine in position 2552 of 23S rRNA at the 2'-O position of the ribose in the fully assembled 50S ribosomal subunit. This chain is Ribosomal RNA large subunit methyltransferase E, found in Dechloromonas aromatica (strain RCB).